Consider the following 89-residue polypeptide: Large ribosomal subunit protein bL31B (89 aa).

This sequence belongs to the bacterial ribosomal protein bL31 family. Type B subfamily. Part of the 50S ribosomal subunit.

The protein is Large ribosomal subunit protein bL31B of Enterococcus faecalis (strain ATCC 700802 / V583).